Here is a 73-residue protein sequence, read N- to C-terminus: Acyl carrier protein (73 aa).

Residues M1–K73 enclose the Carrier domain. At S35 the chain carries O-(pantetheine 4'-phosphoryl)serine.

This sequence belongs to the acyl carrier protein (ACP) family. 4'-phosphopantetheine is transferred from CoA to a specific serine of apo-ACP by AcpS. This modification is essential for activity because fatty acids are bound in thioester linkage to the sulfhydryl of the prosthetic group.

The protein localises to the cytoplasm. The protein operates within lipid metabolism; fatty acid biosynthesis. Its function is as follows. Carrier of the growing fatty acid chain in fatty acid biosynthesis. This is Acyl carrier protein from Lactococcus lactis subsp. lactis (strain IL1403) (Streptococcus lactis).